We begin with the raw amino-acid sequence, 685 residues long: Keratin, type II cytoskeletal 2 epidermal (685 aa).

Residues 1–20 (MSCQISCKSRRGGGGGGGGG) are disordered. Residues 1–196 (MSCQISCKSR…DPEIQNVKSQ (196 aa)) form a head region. The residue at position 22 (Arg22) is an Asymmetric dimethylarginine. A phosphoserine mark is found at Ser25 and Ser28. Arg52 carries the omega-N-methylarginine modification. Position 64 is a phosphoserine (Ser64). The coil 1A stretch occupies residues 197-232 (EREQIKTLNNKFASFIDTVRFLEQQNQVLHTKWELL). The 315-residue stretch at 197–511 (EREQIKTLNN…KLLEGEECRM (315 aa)) folds into the IF rod domain. The tract at residues 233–251 (QQLDVGTRTTNLDPVFQAY) is linker 1. Positions 252 to 343 (IGILKKQVDR…TLYDTELSQL (92 aa)) are coil 1B. A linker 12 region spans residues 344–367 (QQNVTDTNVILSMDNNRNLDLDSI). The tract at residues 368–507 (IAEVQSQYEI…ATYRKLLEGE (140 aa)) is coil 2. Residues 508 to 685 (ECRMSGDFSD…CGSGVTFSFR (178 aa)) form a tail region. Residues 532–685 (VASKAGFGSG…CGSGVTFSFR (154 aa)) form a disordered region. The span at 538 to 678 (FGSGGQSSGG…GSGSGEGCGS (141 aa)) shows a compositional bias: gly residues. Residues Arg554, Arg588, Arg603, and Arg653 each carry the omega-N-methylarginine modification.

Belongs to the intermediate filament family. Heterotetramer of two type I and two type II keratins. Associates with KRT10.

It localises to the cytoplasm. Functionally, probably contributes to terminal cornification. Associated with keratinocyte activation, proliferation and keratinization. Required for maintenance of corneocytes and keratin filaments in suprabasal keratinocytes in the epidermis of the ear, potentially via moderation of expression and localization of keratins and their partner proteins. Plays a role in the establishment of the epidermal barrier on plantar skin. The polypeptide is Keratin, type II cytoskeletal 2 epidermal (Rattus norvegicus (Rat)).